The following is a 688-amino-acid chain: Homoaconitase, mitochondrial (688 aa).

Residues C335, C395, and C398 each contribute to the [4Fe-4S] cluster site. The interval 468–494 (SIDLPKSSGNTGATSEEPISEDDTSEA) is disordered.

Belongs to the aconitase/IPM isomerase family. It depends on [4Fe-4S] cluster as a cofactor.

Its subcellular location is the mitochondrion. The catalysed reaction is (2R,3S)-homoisocitrate = cis-homoaconitate + H2O. It participates in amino-acid biosynthesis; L-lysine biosynthesis via AAA pathway; L-alpha-aminoadipate from 2-oxoglutarate: step 3/5. Catalyzes the reversible hydration of cis-homoaconitate to (2R,3S)-homoisocitrate, a step in the alpha-aminoadipate pathway for lysine biosynthesis. The sequence is that of Homoaconitase, mitochondrial (LYS4) from Candida parapsilosis (Yeast).